The primary structure comprises 653 residues: Rab proteins geranylgeranyltransferase component A 1 (653 aa).

Residues 606–653 (PPPPNPEDIILDGDSLQPEASESSAIPEANSETFKESTNLGNLEESSE) are disordered. Residues 623-646 (PEASESSAIPEANSETFKESTNLG) are compositionally biased toward polar residues.

It belongs to the Rab GDI family. In terms of assembly, monomer. Heterotrimer composed of RABGGTA, RABGGTB and CHM; within this trimer, RABGGTA and RABGGTB form the catalytic component B, while CHM (component A) mediates Rab protein binding. Can associate with the Rab GGTase dimer (RGGT or component B) prior to Rab protein binding; the association is stabilized by geranylgeranyl pyrophosphate (GGpp). The CHM:RGGT:Rab complex is destabilized by GGpp. Interacts with RAB1A, RAB1B, RAB5A, RAB7A and RAB27A and mediates their prenylation. Interacts with the non-phosphorylated forms of RAB3A, RAB3B, RAB3C, RAB3D, RAB5B, RAB5C, RAB8A, RAB8B, RAB10, RAB12, RAB35, and RAB43.

The protein resides in the cytoplasm. It is found in the cytosol. Functionally, substrate-binding subunit of the Rab geranylgeranyltransferase (GGTase) complex. Binds unprenylated Rab proteins and presents the substrate peptide to the catalytic component B composed of RABGGTA and RABGGTB, and remains bound to it after the geranylgeranyl transfer reaction. The component A is thought to be regenerated by transferring its prenylated Rab back to the donor membrane. Besides, a pre-formed complex consisting of CHM and the Rab GGTase dimer (RGGT or component B) can bind to and prenylate Rab proteins; this alternative pathway is proposed to be the predominant pathway for Rab protein geranylgeranylation. This Homo sapiens (Human) protein is Rab proteins geranylgeranyltransferase component A 1 (CHM).